The sequence spans 356 residues: 3-dehydroquinate synthase (356 aa).

Residues 106–110 (GVVGD), 130–131 (TT), Lys143, and Lys152 each bind NAD(+). Residues Glu185, His248, and His265 each coordinate Zn(2+).

This sequence belongs to the sugar phosphate cyclases superfamily. Dehydroquinate synthase family. The cofactor is Co(2+). Zn(2+) is required as a cofactor. NAD(+) serves as cofactor.

It is found in the cytoplasm. The enzyme catalyses 7-phospho-2-dehydro-3-deoxy-D-arabino-heptonate = 3-dehydroquinate + phosphate. It functions in the pathway metabolic intermediate biosynthesis; chorismate biosynthesis; chorismate from D-erythrose 4-phosphate and phosphoenolpyruvate: step 2/7. Functionally, catalyzes the conversion of 3-deoxy-D-arabino-heptulosonate 7-phosphate (DAHP) to dehydroquinate (DHQ). The chain is 3-dehydroquinate synthase from Thermoanaerobacter sp. (strain X514).